A 218-amino-acid polypeptide reads, in one-letter code: ATP-dependent dethiobiotin synthetase BioD (218 aa).

10–15 lines the ATP pocket; that stretch reads NAGKTT. Threonine 14 is a binding site for Mg(2+). Lysine 35 is an active-site residue. Threonine 39 is a substrate binding site. Residues histidine 52 and glutamate 116 each contribute to the Mg(2+) site. ATP-binding positions include 116–119 and 176–177; these read EGAG and LR.

This sequence belongs to the dethiobiotin synthetase family. Homodimer. Requires Mg(2+) as cofactor.

The protein localises to the cytoplasm. The enzyme catalyses (7R,8S)-7,8-diammoniononanoate + CO2 + ATP = (4R,5S)-dethiobiotin + ADP + phosphate + 3 H(+). The protein operates within cofactor biosynthesis; biotin biosynthesis; biotin from 7,8-diaminononanoate: step 1/2. In terms of biological role, catalyzes a mechanistically unusual reaction, the ATP-dependent insertion of CO2 between the N7 and N8 nitrogen atoms of 7,8-diaminopelargonic acid (DAPA, also called 7,8-diammoniononanoate) to form a ureido ring. The protein is ATP-dependent dethiobiotin synthetase BioD of Helicobacter pylori (strain Shi470).